Consider the following 201-residue polypeptide: Large ribosomal subunit protein uL4 (201 aa).

A disordered region spans residues 44-71 (RAQKTRAEVSGSGKKPWRQKGTGRARSG).

This sequence belongs to the universal ribosomal protein uL4 family. In terms of assembly, part of the 50S ribosomal subunit.

Functionally, one of the primary rRNA binding proteins, this protein initially binds near the 5'-end of the 23S rRNA. It is important during the early stages of 50S assembly. It makes multiple contacts with different domains of the 23S rRNA in the assembled 50S subunit and ribosome. Forms part of the polypeptide exit tunnel. The chain is Large ribosomal subunit protein uL4 from Actinobacillus succinogenes (strain ATCC 55618 / DSM 22257 / CCUG 43843 / 130Z).